A 241-amino-acid polypeptide reads, in one-letter code: Beta-nerve growth factor (241 aa).

The first 18 residues, Met-1–Ala-18, serve as a signal peptide directing secretion. Residues Glu-19–Arg-121 constitute a propeptide that is removed on maturation. Asn-69 and Asn-114 each carry an N-linked (GlcNAc...) asparagine glycan. Cystine bridges form between Cys-136–Cys-201, Cys-179–Cys-229, and Cys-189–Cys-231. A 1-acyl-sn-glycero-3-phospho-(1D-myo-inositol)-binding residues include Tyr-173 and Lys-209. An a 1-acyl-sn-glycero-3-phospho-L-serine-binding site is contributed by Lys-209.

This sequence belongs to the NGF-beta family. As to quaternary structure, homodimer. The homodimer interacts with a single NTRK1 chain. The homodimer interacts with a single NGFR chain. The NGF dimer interacts with a single SORCS2 chain (via extracellular domain). The NGF precursor (proNGF) binds to a receptor complex formed by SORT1 and NGFR, which leads to NGF endocytosis. Both mature NGF and the immature NGF precursor (proNGF) interact with SORCS2 and with the heterodimer formed by SORCS2 and NGFR (via extracellular domains). The NGF precursor (proNGF) has much higher affinity for SORCS2 than mature NGF. The NGF precursor (proNGF) has much higher affinity for SORT1 than mature NGF. Interacts with ADAM10 in a divalent cation-dependent manner. Interaction with SORCS3.

It is found in the secreted. Its subcellular location is the endosome lumen. Functionally, nerve growth factor is important for the development and maintenance of the sympathetic and sensory nervous systems. Extracellular ligand for the NTRK1 and NGFR receptors, activates cellular signaling cascades to regulate neuronal proliferation, differentiation and survival. The immature NGF precursor (proNGF) functions as a ligand for the heterodimeric receptor formed by SORCS2 and NGFR, and activates cellular signaling cascades that lead to inactivation of RAC1 and/or RAC2, reorganization of the actin cytoskeleton and neuronal growth cone collapse. In contrast to mature NGF, the precursor form (proNGF) promotes neuronal apoptosis (in vitro). Inhibits metalloproteinase-dependent proteolysis of platelet glycoprotein VI. Binds lysophosphatidylinositol and lysophosphatidylserine between the two chains of the homodimer. The lipid-bound form promotes histamine relase from mast cells, contrary to the lipid-free form. This is Beta-nerve growth factor (NGF) from Homo sapiens (Human).